The primary structure comprises 114 residues: Monothiol glutaredoxin-S8 (114 aa).

The Glutaredoxin domain occupies 1–113; the sequence is MDRVTRLASQ…PLLRDAGALW (113 aa). Cysteine 21 contributes to the [2Fe-2S] cluster binding site.

It belongs to the glutaredoxin family. CC-type subfamily.

The protein localises to the cytoplasm. In terms of biological role, may only reduce GSH-thiol disulfides, but not protein disulfides. In Oryza sativa subsp. japonica (Rice), this protein is Monothiol glutaredoxin-S8 (GRXS8).